Here is a 96-residue protein sequence, read N- to C-terminus: Putative defensin-like protein 236 (96 aa).

A signal peptide spans 1 to 23 (MKNATSLIIYCFLMFLLMNNVKG). Cystine bridges form between Cys-31-Cys-93, Cys-41-Cys-70, Cys-49-Cys-83, and Cys-68-Cys-85.

The protein belongs to the DEFL family.

The protein resides in the secreted. The chain is Putative defensin-like protein 236 (SCRL20) from Arabidopsis thaliana (Mouse-ear cress).